The primary structure comprises 341 residues: Ketol-acid reductoisomerase (NADP(+)) (341 aa).

Positions 1 to 182 constitute a KARI N-terminal Rossmann domain; that stretch reads MATIYYDKDA…GCTRAGVLET (182 aa). Residues 25–28, S51, S53, and 83–86 each bind NADP(+); these read YGSQ and DQTQ. H108 is a catalytic residue. Residue G134 participates in NADP(+) binding. The region spanning 183 to 328 is the KARI C-terminal knotted domain; sequence TFKEETETDL…KRLRDMMSWI (146 aa). Mg(2+) is bound by residues D191, E195, E227, and E231. S252 is a binding site for substrate.

The protein belongs to the ketol-acid reductoisomerase family. It depends on Mg(2+) as a cofactor.

The catalysed reaction is (2R)-2,3-dihydroxy-3-methylbutanoate + NADP(+) = (2S)-2-acetolactate + NADPH + H(+). The enzyme catalyses (2R,3R)-2,3-dihydroxy-3-methylpentanoate + NADP(+) = (S)-2-ethyl-2-hydroxy-3-oxobutanoate + NADPH + H(+). The protein operates within amino-acid biosynthesis; L-isoleucine biosynthesis; L-isoleucine from 2-oxobutanoate: step 2/4. It functions in the pathway amino-acid biosynthesis; L-valine biosynthesis; L-valine from pyruvate: step 2/4. In terms of biological role, involved in the biosynthesis of branched-chain amino acids (BCAA). Catalyzes an alkyl-migration followed by a ketol-acid reduction of (S)-2-acetolactate (S2AL) to yield (R)-2,3-dihydroxy-isovalerate. In the isomerase reaction, S2AL is rearranged via a Mg-dependent methyl migration to produce 3-hydroxy-3-methyl-2-ketobutyrate (HMKB). In the reductase reaction, this 2-ketoacid undergoes a metal-dependent reduction by NADPH to yield (R)-2,3-dihydroxy-isovalerate. This is Ketol-acid reductoisomerase (NADP(+)) from Anaeromyxobacter dehalogenans (strain 2CP-C).